Reading from the N-terminus, the 122-residue chain is Small ribosomal subunit protein uS13 (122 aa).

A compositionally biased stretch (basic residues) spans 98 to 116; the sequence is VRGQKTKTNARTRKGRRKT. The disordered stretch occupies residues 98-122; the sequence is VRGQKTKTNARTRKGRRKTVGAATK.

This sequence belongs to the universal ribosomal protein uS13 family. Part of the 30S ribosomal subunit. Forms a loose heterodimer with protein S19. Forms two bridges to the 50S subunit in the 70S ribosome.

In terms of biological role, located at the top of the head of the 30S subunit, it contacts several helices of the 16S rRNA. In the 70S ribosome it contacts the 23S rRNA (bridge B1a) and protein L5 of the 50S subunit (bridge B1b), connecting the 2 subunits; these bridges are implicated in subunit movement. Contacts the tRNAs in the A and P-sites. The polypeptide is Small ribosomal subunit protein uS13 (Campylobacter fetus subsp. fetus (strain 82-40)).